We begin with the raw amino-acid sequence, 337 residues long: Inositol 2-dehydrogenase 1 (337 aa).

The protein belongs to the Gfo/Idh/MocA family. As to quaternary structure, homotetramer.

The enzyme catalyses myo-inositol + NAD(+) = scyllo-inosose + NADH + H(+). Its function is as follows. Involved in the oxidation of myo-inositol (MI) to 2-keto-myo-inositol (2KMI or 2-inosose). This is Inositol 2-dehydrogenase 1 from Paenarthrobacter aurescens (strain TC1).